Consider the following 277-residue polypeptide: Alternative cytochrome c oxidase subunit 2 (277 aa).

The Periplasmic segment spans residues 1–40; that stretch reads MAVALILLLIAIGSVLFHLFSPWWWTPIATNWGYIDDTIN. Residues 41–61 traverse the membrane as a helical segment; the sequence is ITFWITGFVFTAVILFMAYCV. Residues 62-83 are Cytoplasmic-facing; the sequence is FRFHHKEGRQAAYNPENKKLEW. The chain crosses the membrane as a helical span at residues 84 to 104; the sequence is WLSVGTGVGVAAMLAPGLVVW. At 105 to 277 the chain is on the periplasmic side; that stretch reads HQFVTVPADA…VRAKYNSGDD (173 aa). H190, C225, C229, and H233 together coordinate Cu cation.

Belongs to the cytochrome c oxidase subunit 2 family.

Its subcellular location is the cell membrane. It catalyses the reaction 4 Fe(II)-[cytochrome c] + O2 + 8 H(+)(in) = 4 Fe(III)-[cytochrome c] + 2 H2O + 4 H(+)(out). Cytochrome c oxidase is the component of the respiratory chain that catalyzes the reduction of oxygen to water. Subunits 1-3 form the functional core of the enzyme complex. Subunit 2 transfers the electrons from cytochrome c via its binuclear copper A center to the bimetallic center of the catalytic subunit 1. This Bradyrhizobium diazoefficiens (strain JCM 10833 / BCRC 13528 / IAM 13628 / NBRC 14792 / USDA 110) protein is Alternative cytochrome c oxidase subunit 2 (coxM).